Consider the following 413-residue polypeptide: Divalent metal cation transporter MntH (413 aa).

Over 1 to 19 the chain is Cytoplasmic; that stretch reads MTDNRVENSSGRAARKLRL. The chain crosses the membrane as a helical span at residues 20 to 39; sequence ALMGPAFIAAIGYIDPGNFA. Topologically, residues 40–51 are periplasmic; that stretch reads TNIQAGASFGYQ. Residues 52–71 form a helical membrane-spanning segment; the sequence is LLWVVVWANLMAMLIQILSA. Residues 72–95 are Cytoplasmic-facing; that stretch reads KLGIATGKNLAEQIRDHYPRPVVW. A helical membrane pass occupies residues 96–118; it reads FYWVQAEIIAMATDLAEFIGAAI. The Periplasmic segment spans residues 119-125; that stretch reads GFKLILG. A helical membrane pass occupies residues 126 to 145; that stretch reads VSLLQGAVLTGIATFLILML. At 146–155 the chain is on the cytoplasmic side; the sequence is QRRGQKPLEK. The helical transmembrane segment at 156–175 threads the bilayer; it reads VIGGLLLFVAAAYIVELFFS. At 176–196 the chain is on the periplasmic side; that stretch reads QPDMAQLGKGMVIPALPNPEA. Residues 197–220 traverse the membrane as a helical segment; it reads VFLAAGVLGATIMPHVIYLHSSLT. Residues 221–238 are Cytoplasmic-facing; it reads QHLHGGTRQQRYSATKWD. The chain crosses the membrane as a helical span at residues 239–258; the sequence is VAIAMTIAGFVNLAMMATAA. At 259 to 276 the chain is on the periplasmic side; it reads AAFHFSGHTGIADLDQAY. A helical transmembrane segment spans residues 277 to 297; that stretch reads LTLEPLLSHAAATVFGLSLVA. Over 298 to 327 the chain is Cytoplasmic; that stretch reads AGLSSTVVGTLAGQVVMQGFVRFHIPLWVR. Residues 328–344 traverse the membrane as a helical segment; sequence RSITMLPSFIVILMGLD. The Periplasmic segment spans residues 345-350; that stretch reads PTRILV. Residues 351 to 370 traverse the membrane as a helical segment; that stretch reads MSQVLLSFGIALALVPLLIF. Residues 371 to 387 lie on the Cytoplasmic side of the membrane; the sequence is TSNATLMGELVNTRRVK. The chain crosses the membrane as a helical span at residues 388-406; that stretch reads QIGWIIVVLVVALNIWLLV. Over 407 to 413 the chain is Periplasmic; that stretch reads GTVMGLS.

Belongs to the NRAMP family.

Its subcellular location is the cell inner membrane. H(+)-stimulated, divalent metal cation uptake system. The polypeptide is Divalent metal cation transporter MntH (Salmonella gallinarum (strain 287/91 / NCTC 13346)).